Consider the following 62-residue polypeptide: Omega-conotoxin-like Bu11 (62 aa).

The signal sequence occupies residues 1–7; that stretch reads ACQLITA. A propeptide spanning residues 8 to 27 is cleaved from the precursor; the sequence is EDSRGTQLHRALRSTSKVSK. 3 disulfide bridges follow: Cys31-Cys46, Cys38-Cys49, and Cys45-Cys56.

The protein belongs to the conotoxin O1 superfamily. In terms of tissue distribution, expressed by the venom duct.

It is found in the secreted. Its function is as follows. Omega-conotoxins act at presynaptic membranes, they bind and block voltage-gated calcium channels (Cav). The sequence is that of Omega-conotoxin-like Bu11 from Conus bullatus (Bubble cone).